Consider the following 420-residue polypeptide: MTMIFDKGNVEDFDKELWDAIHAEEERQEHHIELIASENMVSKAVMAAQGSVLTNKYAEGYPGNRYYGGTECVDIVETLAIERAKKLFGAAFANVQAHSGSQANAAAYMALIEAGDTVLGMDLAAGGHLTHGSPVNFSGKTYHFVGYSVDADTEMLNYEAILEQAKAVQPKLIVAGASAYSRSIDFEKFRAIADHVDAYLMVDMAHIAGLVAAGVHPSPVPYAHIVTSTTHKTLRGPRGGLILTNDEALAKKINSAVFPGLQGGPLEHVIAAKAVAFKEALDPAFKDYAQAIIDNTAAMAAVFAQDDRFRLISGGTDNHVFLVDVTKVIANGKLAQNLLDEVNITLNKNAIPFETLSPFKTSGIRIGCAAITSRGMGVKESQTIAHLIIKALVNHDQETILEEVRQEVRQLTDAFPLYKK.

Residues leucine 123 and 127–129 (GHL) contribute to the (6S)-5,6,7,8-tetrahydrofolate site. Position 232 is an N6-(pyridoxal phosphate)lysine (lysine 232). Position 357 to 359 (357 to 359 (SPF)) interacts with (6S)-5,6,7,8-tetrahydrofolate.

This sequence belongs to the SHMT family. As to quaternary structure, homodimer. Pyridoxal 5'-phosphate serves as cofactor.

It localises to the cytoplasm. The catalysed reaction is (6R)-5,10-methylene-5,6,7,8-tetrahydrofolate + glycine + H2O = (6S)-5,6,7,8-tetrahydrofolate + L-serine. The protein operates within one-carbon metabolism; tetrahydrofolate interconversion. It participates in amino-acid biosynthesis; glycine biosynthesis; glycine from L-serine: step 1/1. Functionally, catalyzes the reversible interconversion of serine and glycine with tetrahydrofolate (THF) serving as the one-carbon carrier. This reaction serves as the major source of one-carbon groups required for the biosynthesis of purines, thymidylate, methionine, and other important biomolecules. Also exhibits THF-independent aldolase activity toward beta-hydroxyamino acids, producing glycine and aldehydes, via a retro-aldol mechanism. This chain is Serine hydroxymethyltransferase, found in Streptococcus pyogenes serotype M2 (strain MGAS10270).